The chain runs to 121 residues: Large ribosomal subunit protein uL18 (121 aa).

This sequence belongs to the universal ribosomal protein uL18 family. In terms of assembly, part of the 50S ribosomal subunit; part of the 5S rRNA/L5/L18/L25 subcomplex. Contacts the 5S and 23S rRNAs.

This is one of the proteins that bind and probably mediate the attachment of the 5S RNA into the large ribosomal subunit, where it forms part of the central protuberance. The protein is Large ribosomal subunit protein uL18 of Burkholderia mallei (strain NCTC 10247).